Consider the following 309-residue polypeptide: Aromatic prenyltransferase (309 aa).

The protein belongs to the aromatic prenyltransferase family.

In terms of biological role, prenyltransferase that attaches isoprenoid moieties to carbon atoms of aromatic substrates in an enzyme-catalyzed Friedel-Crafts reaction. Shows specificity for dimethylallyl diphosphate (DMAPP) and does not accept geranyl diphosphate (GPP) or isopentenyl diphosphate (IPP). Prenylates the artificial substrate 2,7-dihydroxynaphthalene (2,7-DHN), as well as dihydrophenazine-1-carboxylic acid and 4-hydroxybenzoic acid at lower levels. Only traces of products are detected with aspulvinone E or flaviolin as substrates; and no product is formed with L-tryptophan, L-tyrosine, or 4-hydroxyphenylpyruvate. Ptf seems no to be involved in the prenylation reaction in the biosynthesis of aspulvinone H and J and the physiological function of ptf remains unknown. The sequence is that of Aromatic prenyltransferase from Botryotinia fuckeliana (strain B05.10) (Noble rot fungus).